The sequence spans 75 residues: MMPVILPLLLSLAIRGGDGQAIQGDRDLIAKLFKRYQEHGLSVKRACHTCDDGTECCDSRCSCPWNTCTCIPWGK.

The first 19 residues, 1-19 (MMPVILPLLLSLAIRGGDG), serve as a signal peptide directing secretion. Positions 20–43 (QAIQGDRDLIAKLFKRYQEHGLSV) are excised as a propeptide. Residue tryptophan 73 is modified to Tryptophan amide.

The protein belongs to the conotoxin V superfamily. Post-translationally, contains 4 disulfide bonds. In terms of tissue distribution, expressed by the venom duct.

Its subcellular location is the secreted. The protein is Conotoxin Vt15.1 of Conus planorbis (Planorbis cone).